Reading from the N-terminus, the 278-residue chain is Probable F-box protein At1g14315 (278 aa).

The F-box domain maps to 1–43 (MQLLPHDTVEDILERVPVKSLLRFKSACKQWKLTIESQYFQAK).

The sequence is that of Probable F-box protein At1g14315 from Arabidopsis thaliana (Mouse-ear cress).